We begin with the raw amino-acid sequence, 39 residues long: uncharacterized protein (39 aa).

The helical transmembrane segment at 18-38 (AIKVIALVVLITISAVVYLSV) threads the bilayer.

Its subcellular location is the membrane. This is an uncharacterized protein from Enterobacteriaceae (Bacteriophage Mu).